The following is a 707-amino-acid chain: E3 ubiquitin-protein ligase MARCHF7 (707 aa).

Methionine 1 carries the post-translational modification N-acetylmethionine. Disordered regions lie at residues 1 to 126, 157 to 279, 294 to 343, 361 to 425, and 444 to 473; these read MESK…QVPR, LMDY…RRTT, FFSR…RASE, SHNH…HIFR, and AANR…GRNT. Over residues 17-33 the composition is skewed to low complexity; that stretch reads SSSLSARMMSGSRGSSL. Basic and acidic residues predominate over residues 37 to 48; the sequence is YHSRDSSFRLDS. A compositionally biased stretch (low complexity) spans 52–65; sequence STSASASASPFQSA. Composition is skewed to polar residues over residues 66–83, 95–126, 189–212, and 254–270; these read WYSE…SQNQ, SCTN…QVPR, NSMS…HQTI, and ISNS…FQES. The segment covering 294–303 has biased composition (low complexity); the sequence is FFSRRSSQDS. Composition is skewed to polar residues over residues 304-336, 373-392, and 412-421; these read LNTR…TSEV, FNQE…SLRN, and IPTSDTSSRS. A phosphoserine mark is found at serine 317 and serine 389. Residues 444–470 are compositionally biased toward low complexity; sequence AANRPQASAASSSATTGGSTSDSAQGG. The segment at 544-614 adopts an RING-CH-type zinc-finger fold; sequence SEEEEGDLCR…ELCKEKLELN (71 aa). The Zn(2+) site is built by cysteine 552, cysteine 555, cysteine 570, cysteine 572, histidine 580, cysteine 583, cysteine 604, and cysteine 607. Threonine 686 is modified (phosphothreonine). A phosphoserine mark is found at serine 687 and serine 691.

The protein resides in the cytoplasm. The enzyme catalyses S-ubiquitinyl-[E2 ubiquitin-conjugating enzyme]-L-cysteine + [acceptor protein]-L-lysine = [E2 ubiquitin-conjugating enzyme]-L-cysteine + N(6)-ubiquitinyl-[acceptor protein]-L-lysine.. Its pathway is protein modification; protein ubiquitination. Functionally, E3 ubiquitin-protein ligase which may specifically enhance the E2 activity of HIP2. E3 ubiquitin ligases accept ubiquitin from an E2 ubiquitin-conjugating enzyme in the form of a thioester and then directly transfer the ubiquitin to targeted substrates. May be involved in T-cell proliferation by regulating LIF secretion. May play a role in lysosome homeostasis. Promotes 'Lys-6', 'Lys-11' and 'Lys-63'-linked mixed polyubiquitination on ATG14 leading to the inhibition of autophagy by impairing the interaction between ATG14 and STX7. Participates in the dopamine-mediated negative regulation of the NLRP3 inflammasome by promoting its uibiquitination and subsequent degradation. The chain is E3 ubiquitin-protein ligase MARCHF7 (MARCHF7) from Pongo abelii (Sumatran orangutan).